The following is a 240-amino-acid chain: Cell division control protein 14 (240 aa).

As to quaternary structure, interacts with sid1.

It localises to the cytoplasm. Its subcellular location is the cytoskeleton. The protein resides in the microtubule organizing center. The protein localises to the spindle pole body. Functionally, has a role in the septation initiation network (SIN) required for cytokinesis. This is Cell division control protein 14 (cdc14) from Schizosaccharomyces pombe (strain 972 / ATCC 24843) (Fission yeast).